The following is a 70-amino-acid chain: Putative membrane protein insertion efficiency factor (70 aa).

Belongs to the UPF0161 family.

The protein resides in the cell inner membrane. Its function is as follows. Could be involved in insertion of integral membrane proteins into the membrane. In Sphingopyxis alaskensis (strain DSM 13593 / LMG 18877 / RB2256) (Sphingomonas alaskensis), this protein is Putative membrane protein insertion efficiency factor.